A 498-amino-acid chain; its full sequence is Probable cytosol aminopeptidase (498 aa).

Lysine 264 and aspartate 269 together coordinate Mn(2+). Lysine 276 is a catalytic residue. Positions 287, 346, and 348 each coordinate Mn(2+). Arginine 350 is an active-site residue.

This sequence belongs to the peptidase M17 family. Mn(2+) serves as cofactor.

Its subcellular location is the cytoplasm. It catalyses the reaction Release of an N-terminal amino acid, Xaa-|-Yaa-, in which Xaa is preferably Leu, but may be other amino acids including Pro although not Arg or Lys, and Yaa may be Pro. Amino acid amides and methyl esters are also readily hydrolyzed, but rates on arylamides are exceedingly low.. It carries out the reaction Release of an N-terminal amino acid, preferentially leucine, but not glutamic or aspartic acids.. Its function is as follows. Presumably involved in the processing and regular turnover of intracellular proteins. Catalyzes the removal of unsubstituted N-terminal amino acids from various peptides. In Xanthobacter autotrophicus (strain ATCC BAA-1158 / Py2), this protein is Probable cytosol aminopeptidase.